The following is a 182-amino-acid chain: Shikimate kinase (182 aa).

14–19 (GAGKTT) contributes to the ATP binding site. Threonine 18 provides a ligand contact to Mg(2+). Aspartate 36, arginine 60, and glycine 84 together coordinate substrate. Arginine 122 lines the ATP pocket. Residue arginine 141 participates in substrate binding.

This sequence belongs to the shikimate kinase family. Monomer. Mg(2+) is required as a cofactor.

The protein resides in the cytoplasm. It catalyses the reaction shikimate + ATP = 3-phosphoshikimate + ADP + H(+). It participates in metabolic intermediate biosynthesis; chorismate biosynthesis; chorismate from D-erythrose 4-phosphate and phosphoenolpyruvate: step 5/7. Functionally, catalyzes the specific phosphorylation of the 3-hydroxyl group of shikimic acid using ATP as a cosubstrate. In Marinomonas sp. (strain MWYL1), this protein is Shikimate kinase.